Consider the following 224-residue polypeptide: Protein HLJ1 (224 aa).

The J domain occupies 18-87 (DKHEFYEILK…RSIYDRIGRD (70 aa)). Basic and acidic residues predominate over residues 84–93 (IGRDPDDRQM). The segment at 84–107 (IGRDPDDRQMPSRGAASGFRGSAG) is disordered. Serine 109 is modified (phosphoserine). The segment at 173 to 192 (NRGGSPFMRQQPRSRQQQQQ) is disordered. Low complexity predominate over residues 181–192 (RQQPRSRQQQQQ).

This chain is Protein HLJ1 (HLJ1), found in Saccharomyces cerevisiae (strain ATCC 204508 / S288c) (Baker's yeast).